Here is a 643-residue protein sequence, read N- to C-terminus: 1-deoxy-D-xylulose-5-phosphate synthase (643 aa).

Thiamine diphosphate-binding positions include histidine 79 and 120–122; that span reads AHA. Aspartate 151 is a Mg(2+) binding site. Residues 152-153, asparagine 180, tyrosine 287, and glutamate 369 contribute to the thiamine diphosphate site; that span reads GS. Asparagine 180 is a Mg(2+) binding site.

The protein belongs to the transketolase family. DXPS subfamily. In terms of assembly, homodimer. It depends on Mg(2+) as a cofactor. Requires thiamine diphosphate as cofactor.

It catalyses the reaction D-glyceraldehyde 3-phosphate + pyruvate + H(+) = 1-deoxy-D-xylulose 5-phosphate + CO2. It functions in the pathway metabolic intermediate biosynthesis; 1-deoxy-D-xylulose 5-phosphate biosynthesis; 1-deoxy-D-xylulose 5-phosphate from D-glyceraldehyde 3-phosphate and pyruvate: step 1/1. Catalyzes the acyloin condensation reaction between C atoms 2 and 3 of pyruvate and glyceraldehyde 3-phosphate to yield 1-deoxy-D-xylulose-5-phosphate (DXP). This Maricaulis maris (strain MCS10) (Caulobacter maris) protein is 1-deoxy-D-xylulose-5-phosphate synthase.